Here is a 268-residue protein sequence, read N- to C-terminus: Trypsin-like protease (268 aa).

An N-terminal signal peptide occupies residues 1–41 (MTHTTTIAAKRGGLALAKKAAAAGAVALAVASLQPVSAAHA). The propeptide at 42–45 (ADAR) is activation peptide. The Peptidase S1 domain occupies 46–266 (VIGGKPAAQN…FAKDIAKAAS (221 aa)). Residues cysteine 67 and cysteine 83 are joined by a disulfide bond. Active-site charge relay system residues include histidine 82 and aspartate 127. 2 disulfide bridges follow: cysteine 187–cysteine 202 and cysteine 213–cysteine 242. Catalysis depends on serine 217, which acts as the Charge relay system.

The protein belongs to the peptidase S1 family.

Functionally, protease that shows preferential cleavage after Arg and Lys residues. This Streptomyces glaucescens protein is Trypsin-like protease.